Reading from the N-terminus, the 128-residue chain is Small ribosomal subunit protein uS11 (128 aa).

This sequence belongs to the universal ribosomal protein uS11 family. In terms of assembly, part of the 30S ribosomal subunit. Interacts with proteins S7 and S18. Binds to IF-3.

In terms of biological role, located on the platform of the 30S subunit, it bridges several disparate RNA helices of the 16S rRNA. Forms part of the Shine-Dalgarno cleft in the 70S ribosome. The protein is Small ribosomal subunit protein uS11 of Wolbachia sp. subsp. Drosophila simulans (strain wRi).